Consider the following 89-residue polypeptide: Small ribosomal subunit protein uS14 (89 aa).

Belongs to the universal ribosomal protein uS14 family. Part of the 30S ribosomal subunit. Contacts proteins S3 and S10.

Its function is as follows. Binds 16S rRNA, required for the assembly of 30S particles and may also be responsible for determining the conformation of the 16S rRNA at the A site. In Chlorobium limicola (strain DSM 245 / NBRC 103803 / 6330), this protein is Small ribosomal subunit protein uS14.